Reading from the N-terminus, the 186-residue chain is Holliday junction branch migration complex subunit RuvA (186 aa).

Residues Met-1–Lys-61 form a domain I region. Residues Asp-62–Leu-134 are domain II. Residues Leu-134–Gln-137 are flexible linker. Residues Leu-138 to Lys-186 form a domain III region.

It belongs to the RuvA family. In terms of assembly, homotetramer. Forms an RuvA(8)-RuvB(12)-Holliday junction (HJ) complex. HJ DNA is sandwiched between 2 RuvA tetramers; dsDNA enters through RuvA and exits via RuvB. An RuvB hexamer assembles on each DNA strand where it exits the tetramer. Each RuvB hexamer is contacted by two RuvA subunits (via domain III) on 2 adjacent RuvB subunits; this complex drives branch migration. In the full resolvosome a probable DNA-RuvA(4)-RuvB(12)-RuvC(2) complex forms which resolves the HJ.

Its subcellular location is the cytoplasm. Functionally, the RuvA-RuvB-RuvC complex processes Holliday junction (HJ) DNA during genetic recombination and DNA repair, while the RuvA-RuvB complex plays an important role in the rescue of blocked DNA replication forks via replication fork reversal (RFR). RuvA specifically binds to HJ cruciform DNA, conferring on it an open structure. The RuvB hexamer acts as an ATP-dependent pump, pulling dsDNA into and through the RuvAB complex. HJ branch migration allows RuvC to scan DNA until it finds its consensus sequence, where it cleaves and resolves the cruciform DNA. The polypeptide is Holliday junction branch migration complex subunit RuvA (Acholeplasma laidlawii (strain PG-8A)).